We begin with the raw amino-acid sequence, 88 residues long: Small ribosomal subunit protein uS19 (88 aa).

The protein belongs to the universal ribosomal protein uS19 family.

In terms of biological role, protein S19 forms a complex with S13 that binds strongly to the 16S ribosomal RNA. This chain is Small ribosomal subunit protein uS19 (rpsS), found in Mycoplasma capricolum subsp. capricolum (strain California kid / ATCC 27343 / NCTC 10154).